Consider the following 106-residue polypeptide: Small membrane A-kinase anchor protein (106 aa).

A lipid anchor (N-myristoyl glycine) is attached at G2. The S-palmitoyl cysteine moiety is linked to residue C3. S40 is subject to Phosphoserine. The segment at 62 to 85 (ALILEFADRLASEIVEDALQQWAC) is PKA-RI-binding. S98 is modified (phosphoserine).

This sequence belongs to the small membrane AKAP family. Interacts with PKA type I regulatory subunits PRKAR1A and PRKAR1B. Also binds to type II regulatory subunits, but at a tenfold lower affinity. In terms of processing, may be palmitoylated at Cys-3. In terms of tissue distribution, widely expressed, with very low levels in spleen and liver.

It is found in the cell membrane. In terms of biological role, binds to type I regulatory subunits of protein kinase A (PKA-RI) and may anchor/target them to the plasma membrane. This is Small membrane A-kinase anchor protein from Mus musculus (Mouse).